Consider the following 685-residue polypeptide: Protein arginine N-methyltransferase 7 (685 aa).

SAM-dependent MTase PRMT-type domains are found at residues 14-355 (QATW…YSLW) and 364-685 (AESI…LKSI).

This sequence belongs to the class I-like SAM-binding methyltransferase superfamily. Protein arginine N-methyltransferase family. PRMT7 subfamily.

Functionally, essential arginine methyltransferase that can both catalyze the formation of omega-N monomethylarginine (MMA) and symmetrical dimethylarginine (sDMA). Specifically mediates the symmetrical dimethylation of arginine residues in the small nuclear ribonucleoproteins SmD1 and SmD3. The polypeptide is Protein arginine N-methyltransferase 7 (Art7) (Drosophila willistoni (Fruit fly)).